Consider the following 542-residue polypeptide: MTRFIFITGGVVSSLGKGLASAALGALLQARGFKVRLRKLDPYLNVDPGTMSPYQHGEVYVTDDGAETDLDLGHYERFTGVPTRQSDNITTGRIYSNVIAKERRGDYLGATVQVIPHITDAIKEFVQADLTDEDFCLVEVGGTVGDIESLPFLEAIRQLGNELGPDRALFTHVTLLPYIPAAGELKTKPTQHSVKELLSVGIQPQILLCRADRPIPDNERRKIALFCNIKQEAVIAALDVDTIYQVPISYHEQGFDTQVLKFFGMPVGGEPDLSRWQEIVSRVRHPEGEVTIAVVGKYTSLLDAYKSLGEALTHGGIANNVKVKLDWIDAEIFETDGAIHRLEGVHGILVPGGFGERGTEGKIKAAQFARERGIPYFGICFGMQMAVIEATRHLAGLENAGSSEFGHPDPAVVGLMTEWSRGNQLEKRAAGGDLGGTMRLGSYDCHLLPGTKVRDIYGADFIQERHRHRYEVNINFRDKLEAVGLTFSGLSPDGVLPEIVELPTHPWYIGVQFHPELKSKPFEPHPLFTSFIRAAIEQSRLV.

The amidoligase domain stretch occupies residues 1–265 (MTRFIFITGG…DTQVLKFFGM (265 aa)). Ser13 is a binding site for CTP. A UTP-binding site is contributed by Ser13. 14 to 19 (SLGKGL) is an ATP binding site. Residue Tyr54 coordinates L-glutamine. Position 71 (Asp71) interacts with ATP. Residues Asp71 and Glu139 each coordinate Mg(2+). CTP-binding positions include 146-148 (DIE), 186-191 (KTKPTQ), and Lys222. UTP contacts are provided by residues 186–191 (KTKPTQ) and Lys222. A Glutamine amidotransferase type-1 domain is found at 291–541 (TIAVVGKYTS…IRAAIEQSRL (251 aa)). Gly353 contacts L-glutamine. Catalysis depends on Cys380, which acts as the Nucleophile; for glutamine hydrolysis. Residues 381 to 384 (FGMQ), Glu404, and Arg469 each bind L-glutamine. Catalysis depends on residues His514 and Glu516.

Belongs to the CTP synthase family. As to quaternary structure, homotetramer.

It catalyses the reaction UTP + L-glutamine + ATP + H2O = CTP + L-glutamate + ADP + phosphate + 2 H(+). The enzyme catalyses L-glutamine + H2O = L-glutamate + NH4(+). It carries out the reaction UTP + NH4(+) + ATP = CTP + ADP + phosphate + 2 H(+). The protein operates within pyrimidine metabolism; CTP biosynthesis via de novo pathway; CTP from UDP: step 2/2. Its activity is regulated as follows. Allosterically activated by GTP, when glutamine is the substrate; GTP has no effect on the reaction when ammonia is the substrate. The allosteric effector GTP functions by stabilizing the protein conformation that binds the tetrahedral intermediate(s) formed during glutamine hydrolysis. Inhibited by the product CTP, via allosteric rather than competitive inhibition. Its function is as follows. Catalyzes the ATP-dependent amination of UTP to CTP with either L-glutamine or ammonia as the source of nitrogen. Regulates intracellular CTP levels through interactions with the four ribonucleotide triphosphates. This chain is CTP synthase, found in Rhodospirillum centenum (strain ATCC 51521 / SW).